The following is a 234-amino-acid chain: 2-phospho-L-lactate guanylyltransferase (234 aa).

It belongs to the CofC family. Homodimer.

It catalyses the reaction (2S)-2-phospholactate + GTP + H(+) = (2S)-lactyl-2-diphospho-5'-guanosine + diphosphate. It functions in the pathway cofactor biosynthesis; coenzyme F420 biosynthesis. Guanylyltransferase that catalyzes the activation of (2S)-2-phospholactate (2-PL) as (2S)-lactyl-2-diphospho-5'-guanosine, via the condensation of 2-PL with GTP. It is involved in the biosynthesis of coenzyme F420, a hydride carrier cofactor. This chain is 2-phospho-L-lactate guanylyltransferase, found in Methanobrevibacter ruminantium (strain ATCC 35063 / DSM 1093 / JCM 13430 / OCM 146 / M1) (Methanobacterium ruminantium).